We begin with the raw amino-acid sequence, 64 residues long: Toxin Tce3 (64 aa).

The LCN-type CS-alpha/beta domain maps to 1 to 62 (KDGYIIEHRG…IFDSNNNKCS (62 aa)). Cystine bridges form between cysteine 11-cysteine 61, cysteine 15-cysteine 37, cysteine 23-cysteine 42, and cysteine 27-cysteine 44.

This sequence belongs to the long (4 C-C) scorpion toxin superfamily. Sodium channel inhibitor family. Beta subfamily. As to expression, expressed by the venom gland.

It localises to the secreted. Its function is as follows. Inhibits the sodium (Nav) currents in an apparent irreversible manner. Produces small depolarization and induces repetitive firing in squid axons. Is specific for arthropods (crickets, triatomides, crabs and squids), but is non-toxic to mice. Shows antibacterial activity against both Gram-positive and Gram-negative bacteria. This chain is Toxin Tce3, found in Tityus cerroazul (Scorpion).